We begin with the raw amino-acid sequence, 288 residues long: Small ribosomal subunit protein uS2 (288 aa).

The tract at residues Arg-228–Ala-288 is disordered. Positions Gln-257–Ala-288 are enriched in low complexity.

Belongs to the universal ribosomal protein uS2 family.

The sequence is that of Small ribosomal subunit protein uS2 from Rhodococcus opacus (strain B4).